We begin with the raw amino-acid sequence, 260 residues long: MSHHWGYGEHNGPEHWHKDFPIADGERQSPVDIDTKAVVPDPALKPLALLYEQAASRRMVNNGHSFNVEFDDSQDKAVLKDGPLTGTYRLVQFHFHWGSSDDQGSEHTVDRKKYAAELHLVHWNTKYGDFGTAAQQPDGLAVVGVFLKVGDANPALQKVLDVLDSIKTKGKSADFPNFDPSSLLKRALNYWTYPGSLTNPPLLESVTWVVLKEPTSVSSQQMLKFRSLNFNAEGEPELLMLANWRPAQPLKNRQVRVFPK.

An N-acetylserine modification is found at S2. Residue S2 is modified to Phosphoserine. In terms of domain architecture, Alpha-carbonic anhydrase spans H3–P259. The active-site Proton donor/acceptor is H64. 3 residues coordinate Zn(2+): H94, H96, and H119. Phosphoserine occurs at positions 165 and 172. T198–N199 provides a ligand contact to substrate.

The protein belongs to the alpha-carbonic anhydrase family. As to quaternary structure, interacts with SLC4A4 and SLC26A6. Interaction with SLC4A7 regulates SLC4A7 transporter activity. It depends on Zn(2+) as a cofactor.

Its subcellular location is the cytoplasm. The protein resides in the cell membrane. The catalysed reaction is hydrogencarbonate + H(+) = CO2 + H2O. It catalyses the reaction urea = cyanamide + H2O. Inhibited by acetazolamide. Catalyzes the reversible hydration of carbon dioxide. Can also hydrate cyanamide to urea. Involved in the regulation of fluid secretion into the anterior chamber of the eye. Essential for bone resorption and osteoclast differentiation. Contributes to intracellular pH regulation in the duodenal upper villous epithelium during proton-coupled peptide absorption. Stimulates the chloride-bicarbonate exchange activity of SLC26A6. This is Carbonic anhydrase 2 (CA2) from Ovis aries (Sheep).